The chain runs to 322 residues: Secreted RxLR effector protein RXLR-C17 (322 aa).

Residues 1 to 25 form the signal peptide; the sequence is MREPAFSFRLHLFAAMILLVDVFSA. Positions 43–62 match the RxLR-dEER motif; the sequence is RQLRARDSQAKNYVIRDEER. Residue N73 is glycosylated (N-linked (GlcNAc...) asparagine).

The protein belongs to the RxLR effector family.

The protein resides in the secreted. It localises to the host cytoplasm. It is found in the host nucleus. In terms of biological role, secreted effector that suppresses pattern-triggered immunity (PTI) in plant host. The protein is Secreted RxLR effector protein RXLR-C17 of Plasmopara halstedii (Downy mildew of sunflower).